The sequence spans 605 residues: Aspartate--tRNA(Asp/Asn) ligase (605 aa).

Glu-178 serves as a coordination point for L-aspartate. Residues 202–205 (QLFK) are aspartate. Arg-224 is an L-aspartate binding site. ATP-binding positions include 224–226 (RDE) and Gln-233. Residue His-458 coordinates L-aspartate. An ATP-binding site is contributed by Glu-488. Arg-495 contacts L-aspartate. Position 540–543 (540–543 (GLDR)) interacts with ATP. The interval 580-605 (QQLKELHVTPAKPAKTTAKTKPRPAD) is disordered.

The protein belongs to the class-II aminoacyl-tRNA synthetase family. Type 1 subfamily. As to quaternary structure, homodimer.

Its subcellular location is the cytoplasm. The enzyme catalyses tRNA(Asx) + L-aspartate + ATP = L-aspartyl-tRNA(Asx) + AMP + diphosphate. Aspartyl-tRNA synthetase with relaxed tRNA specificity since it is able to aspartylate not only its cognate tRNA(Asp) but also tRNA(Asn). Reaction proceeds in two steps: L-aspartate is first activated by ATP to form Asp-AMP and then transferred to the acceptor end of tRNA(Asp/Asn). In Thermosynechococcus vestitus (strain NIES-2133 / IAM M-273 / BP-1), this protein is Aspartate--tRNA(Asp/Asn) ligase.